Consider the following 598-residue polypeptide: Peroxisomal multifunctional enzyme type 2 (598 aa).

A (3R)-hydroxyacyl-CoA dehydrogenase region spans residues 1 to 309 (MSSSDGKLRY…LEVLEKLKEG (309 aa)). Residues 16–40 (VVTGAGAGLGREYALLFAERGAKVV), L24, D43, 78–79 (SV), and N102 each bind NAD(+). Position 154 (S154) interacts with substrate. The active-site Proton acceptor is the Y167. Residues 167-171 (YTAAK) and 199-202 (AASR) each bind NAD(+). The interval 310–598 (GGDAIEDAFE…VDLKSSQAKL (289 aa)) is enoyl-CoA hydratase 2. (3R)-3-hydroxydecanoyl-CoA is bound by residues 390–391 (HG), K419, 496–501 (DKNPLH), G519, and F549. The 118-residue stretch at 469 to 586 (PAPNRQPDAT…VETGKEVISG (118 aa)) folds into the MaoC-like domain. Residues 596–598 (AKL) carry the Microbody targeting signal motif.

This sequence belongs to the short-chain dehydrogenases/reductases (SDR) family. In terms of assembly, homodimer.

The protein localises to the peroxisome. It catalyses the reaction a (3R)-3-hydroxyacyl-CoA + NAD(+) = a 3-oxoacyl-CoA + NADH + H(+). The catalysed reaction is a (3R)-3-hydroxyacyl-CoA = a (2E)-enoyl-CoA + H2O. It participates in lipid metabolism; fatty acid beta-oxidation. Functionally, bifunctional enzyme acting on the peroxisomal beta-oxidation pathway for fatty acids. The sequence is that of Peroxisomal multifunctional enzyme type 2 from Drosophila melanogaster (Fruit fly).